The sequence spans 366 residues: D-alanine--D-alanine ligase (366 aa).

The region spanning 150 to 353 is the ATP-grasp domain; that stretch reads KRVLRDAGVP…YPALVDRLIV (204 aa). 180 to 235 contacts ATP; it reads IGQLGLPLFIKPASQGSSVGVSKVTDRAGFAAALALAFRYDAKVLVEQGISGREIE. Residues Asp307, Glu320, and Asn322 each contribute to the Mg(2+) site.

This sequence belongs to the D-alanine--D-alanine ligase family. The cofactor is Mg(2+). It depends on Mn(2+) as a cofactor.

It localises to the cytoplasm. The enzyme catalyses 2 D-alanine + ATP = D-alanyl-D-alanine + ADP + phosphate + H(+). It participates in cell wall biogenesis; peptidoglycan biosynthesis. Cell wall formation. In Sodalis glossinidius (strain morsitans), this protein is D-alanine--D-alanine ligase.